The chain runs to 156 residues: Organelle RRM domain-containing protein 2, mitochondrial (156 aa).

The N-terminal 28 residues, 1–28 (MAMAMRLPAISRAVTEVASAPVGLRRLF), are a transit peptide targeting the mitochondrion. The 79-residue stretch at 56–134 (TNLFVSGLSK…WVIFAEYARP (79 aa)) folds into the RRM domain. A Phosphoserine modification is found at Ser-64. Residues 137 to 148 (QSQSYQPQNNMS) are compositionally biased toward polar residues. Residues 137-156 (QSQSYQPQNNMSRPPYYGNR) form a disordered region.

In terms of assembly, interacts with RBG3/ORRM3. Binds to RBG2/ORRM5.

The protein localises to the mitochondrion. Its function is as follows. Involved in C-to-U editing of mitochondrial RNA. Functions as minor mitochondrial editing factor. Controls 6 percent of the mitochondrial editing sites. The chain is Organelle RRM domain-containing protein 2, mitochondrial from Arabidopsis thaliana (Mouse-ear cress).